A 500-amino-acid chain; its full sequence is Centrosomal protein of 57 kDa (500 aa).

The span at 1–17 (MAAASVSAASGSHLSNS) shows a compositional bias: low complexity. Disordered stretches follow at residues 1–34 (MAAASVSAASGSHLSNSFAEPSRSNGSMVRHSSS) and 43–62 (KPFLNSDLRRSPSKPTLAYP). The span at 18–34 (FAEPSRSNGSMVRHSSS) shows a compositional bias: polar residues. Serine 53 and serine 55 each carry phosphoserine. The centrosome localization domain (CLD) stretch occupies residues 58-239 (TLAYPESNSR…KAAELQTGLE (182 aa)). 2 coiled-coil regions span residues 63–242 (ESNS…ETNR) and 392–492 (ELKD…NSLQ). The segment at 277-491 (GAQPHYRLCL…KDMQSIQNSL (215 aa)) is mediates interaction with microtubules. Over residues 434–450 (KKELKATKKTLDEERNS) the composition is skewed to basic and acidic residues. The segment at 434–472 (KKELKATKKTLDEERNSSSRSGITGTTNKKDFMKLRPGE) is disordered. Over residues 451-460 (SSRSGITGTT) the composition is skewed to polar residues. A compositionally biased stretch (basic and acidic residues) spans 461–471 (NKKDFMKLRPG).

It belongs to the translokin family. Homodimer and homooligomer. Interacts with microtubules. Interacts with FGF2 and RAP80. Does not interact with FGF1 or FGF2 isoform 24 kDa. Ubiquitous.

It is found in the nucleus. Its subcellular location is the cytoplasm. The protein resides in the cytoskeleton. It localises to the microtubule organizing center. The protein localises to the centrosome. Functionally, centrosomal protein which may be required for microtubule attachment to centrosomes. May act by forming ring-like structures around microtubules. Mediates nuclear translocation and mitogenic activity of the internalized growth factor FGF2, but that of FGF1. In Homo sapiens (Human), this protein is Centrosomal protein of 57 kDa (CEP57).